Here is a 443-residue protein sequence, read N- to C-terminus: Aspartic protease PEP3 (443 aa).

The signal sequence occupies residues 1–36 (MQNRPRVFDSAMNLSPNMHFLSLMPGLLLLSLQVHT). Positions 37-107 (SPTPLKKTIR…NTVSKAMQAN (71 aa)) are cleaved as a propeptide — activation peptide. The Peptidase A1 domain maps to 123–440 (YLSPVTIGGQ…DLRGPSLHVA (318 aa)). D139 is an active-site residue. Residues N180 and N293 are each glycosylated (N-linked (GlcNAc...) asparagine). The active site involves D327. A disulfide bridge links C363 with C403. N-linked (GlcNAc...) asparagine glycosylation is found at N364 and N388.

It belongs to the peptidase A1 family. As to quaternary structure, monomer.

The protein localises to the secreted. Secreted aspartic endopeptidase that allows assimilation of proteinaceous substrates. The scissile peptide bond is attacked by a nucleophilic water molecule activated by two aspartic residues in the active site. Shows a broad primary substrate specificity. Favors hydrophobic residues at the P1 and P1' positions. This chain is Aspartic protease PEP3, found in Coccidioides posadasii (strain C735) (Valley fever fungus).